The sequence spans 177 residues: Neuroblastoma suppressor of tumorigenicity 1 (177 aa).

The first 16 residues, 1-16 (MLWFVVGALFPALLLA), serve as a signal peptide directing secretion. Disulfide bonds link cysteine 34/cysteine 84, cysteine 48/cysteine 98, cysteine 58/cysteine 117, cysteine 62/cysteine 119, and cysteine 81/cysteine 122. The CTCK domain occupies 34–123 (CEAKNITQIV…ILHCSCQACG (90 aa)). The segment at 143–177 (MPAEGPGPHHYAHHQQEVEEPPASSHHHHEEEGDE) is disordered.

The protein belongs to the DAN family.

It localises to the secreted. Its function is as follows. May act as a tumor suppressor. This is Neuroblastoma suppressor of tumorigenicity 1 (NBL1) from Gallus gallus (Chicken).